A 374-amino-acid polypeptide reads, in one-letter code: Alcohol dehydrogenase 1 (374 aa).

N-acetylserine is present on serine 1. Cysteine 46, histidine 67, cysteine 97, cysteine 100, cysteine 103, cysteine 111, and cysteine 174 together coordinate Zn(2+). NAD(+) contacts are provided by residues 199–204 (GLGGVG), aspartate 223, lysine 228, 292–294 (VGV), and arginine 369.

The protein belongs to the zinc-containing alcohol dehydrogenase family. Class-I subfamily. As to quaternary structure, homodimer. Zn(2+) serves as cofactor.

The protein localises to the cytoplasm. It catalyses the reaction a primary alcohol + NAD(+) = an aldehyde + NADH + H(+). The enzyme catalyses a secondary alcohol + NAD(+) = a ketone + NADH + H(+). The polypeptide is Alcohol dehydrogenase 1 (ADH1) (Struthio camelus (Common ostrich)).